A 308-amino-acid chain; its full sequence is Ribosomal RNA large subunit methyltransferase F (308 aa).

Belongs to the methyltransferase superfamily. METTL16/RlmF family.

It localises to the cytoplasm. It carries out the reaction adenosine(1618) in 23S rRNA + S-adenosyl-L-methionine = N(6)-methyladenosine(1618) in 23S rRNA + S-adenosyl-L-homocysteine + H(+). In terms of biological role, specifically methylates the adenine in position 1618 of 23S rRNA. In Salmonella arizonae (strain ATCC BAA-731 / CDC346-86 / RSK2980), this protein is Ribosomal RNA large subunit methyltransferase F.